The following is a 510-amino-acid chain: ATP synthase subunit alpha (510 aa).

169-176 (GDRQTGKT) contacts ATP.

Belongs to the ATPase alpha/beta chains family. F-type ATPases have 2 components, CF(1) - the catalytic core - and CF(0) - the membrane proton channel. CF(1) has five subunits: alpha(3), beta(3), gamma(1), delta(1), epsilon(1). CF(0) has three main subunits: a(1), b(2) and c(9-12). The alpha and beta chains form an alternating ring which encloses part of the gamma chain. CF(1) is attached to CF(0) by a central stalk formed by the gamma and epsilon chains, while a peripheral stalk is formed by the delta and b chains.

The protein resides in the cell inner membrane. The catalysed reaction is ATP + H2O + 4 H(+)(in) = ADP + phosphate + 5 H(+)(out). In terms of biological role, produces ATP from ADP in the presence of a proton gradient across the membrane. The alpha chain is a regulatory subunit. The polypeptide is ATP synthase subunit alpha (Azorhizobium caulinodans (strain ATCC 43989 / DSM 5975 / JCM 20966 / LMG 6465 / NBRC 14845 / NCIMB 13405 / ORS 571)).